The primary structure comprises 506 residues: ATP synthase subunit alpha (506 aa).

171–178 (GDRKTGKT) lines the ATP pocket.

The protein belongs to the ATPase alpha/beta chains family. F-type ATPases have 2 components, CF(1) - the catalytic core - and CF(0) - the membrane proton channel. CF(1) has five subunits: alpha(3), beta(3), gamma(1), delta(1), epsilon(1). CF(0) has three main subunits: a(1), b(2) and c(9-12). The alpha and beta chains form an alternating ring which encloses part of the gamma chain. CF(1) is attached to CF(0) by a central stalk formed by the gamma and epsilon chains, while a peripheral stalk is formed by the delta and b chains.

Its subcellular location is the cell inner membrane. The catalysed reaction is ATP + H2O + 4 H(+)(in) = ADP + phosphate + 5 H(+)(out). Functionally, produces ATP from ADP in the presence of a proton gradient across the membrane. The alpha chain is a regulatory subunit. This Anaplasma phagocytophilum (strain HZ) protein is ATP synthase subunit alpha.